A 476-amino-acid chain; its full sequence is 3-isopropylmalate dehydratase large subunit (476 aa).

The [4Fe-4S] cluster site is built by C357, C417, and C420.

The protein belongs to the aconitase/IPM isomerase family. LeuC type 1 subfamily. In terms of assembly, heterodimer of LeuC and LeuD. Requires [4Fe-4S] cluster as cofactor.

The catalysed reaction is (2R,3S)-3-isopropylmalate = (2S)-2-isopropylmalate. The protein operates within amino-acid biosynthesis; L-leucine biosynthesis; L-leucine from 3-methyl-2-oxobutanoate: step 2/4. Its function is as follows. Catalyzes the isomerization between 2-isopropylmalate and 3-isopropylmalate, via the formation of 2-isopropylmaleate. The sequence is that of 3-isopropylmalate dehydratase large subunit from Mycobacterium leprae (strain TN).